Consider the following 319-residue polypeptide: Ribosomal RNA large subunit methyltransferase F (319 aa).

The tract at residues 1 to 25 (MAPFFSAMTSKKQSQGLPKGPHPDN) is disordered. Over residues 7–16 (AMTSKKQSQG) the composition is skewed to polar residues.

Belongs to the methyltransferase superfamily. METTL16/RlmF family.

The protein localises to the cytoplasm. The catalysed reaction is adenosine(1618) in 23S rRNA + S-adenosyl-L-methionine = N(6)-methyladenosine(1618) in 23S rRNA + S-adenosyl-L-homocysteine + H(+). Its function is as follows. Specifically methylates the adenine in position 1618 of 23S rRNA. In Shewanella amazonensis (strain ATCC BAA-1098 / SB2B), this protein is Ribosomal RNA large subunit methyltransferase F.